Here is a 231-residue protein sequence, read N- to C-terminus: Large ribosomal subunit protein uL1 (231 aa).

Belongs to the universal ribosomal protein uL1 family. As to quaternary structure, part of the 50S ribosomal subunit.

Functionally, binds directly to 23S rRNA. The L1 stalk is quite mobile in the ribosome, and is involved in E site tRNA release. Protein L1 is also a translational repressor protein, it controls the translation of the L11 operon by binding to its mRNA. This is Large ribosomal subunit protein uL1 from Pseudomonas syringae pv. tomato (strain ATCC BAA-871 / DC3000).